A 156-amino-acid chain; its full sequence is Small ribosomal subunit protein uS7 (156 aa).

The protein belongs to the universal ribosomal protein uS7 family. In terms of assembly, part of the 30S ribosomal subunit. Contacts proteins S9 and S11.

Functionally, one of the primary rRNA binding proteins, it binds directly to 16S rRNA where it nucleates assembly of the head domain of the 30S subunit. Is located at the subunit interface close to the decoding center, probably blocks exit of the E-site tRNA. This chain is Small ribosomal subunit protein uS7, found in Rhodobacter capsulatus (Rhodopseudomonas capsulata).